The following is a 289-amino-acid chain: RNA-binding protein CP29B, chloroplastic (289 aa).

The N-terminal 62 residues, 1-62, are a transit peptide targeting the chloroplast; that stretch reads MAASASSLAL…NSPASRFARN (62 aa). Phosphoserine is present on residues serine 6 and serine 12. An N-acetylvaline modification is found at valine 63. The RRM 1 domain maps to 91–169; sequence LKLFVGNLPF…RPLRVNAGPP (79 aa). Residues 158-199 form a disordered region; that stretch reads DGRPLRVNAGPPPPKREDGFSRGPRSSFGSSGSGYGGGGGSG. Residues 170-203 form a linker (Gly-rich) region; sequence PPKREDGFSRGPRSSFGSSGSGYGGGGGSGAGSG. Residues 178-187 show a composition bias toward low complexity; sequence SRGPRSSFGS. Positions 188 to 199 are enriched in gly residues; that stretch reads SGSGYGGGGGSG. The region spanning 204-282 is the RRM 2 domain; the sequence is NRVYVGNLSW…RQIRVSEAEA (79 aa).

In terms of processing, ADP-ribosylated by the Pseudomonas syringae type III effector HopU1. ADP-ribosylation reduces the ability of the protein to bind RNA. Post-translationally, phosphorylated on tyrosine residues after treatment with abscisic acid (ABA). Phosphorylation may reduce the ability of the protein to bind RNA.

The protein localises to the plastid. Its subcellular location is the chloroplast. Functionally, could be involved in splicing and/or processing of chloroplast RNA's. This chain is RNA-binding protein CP29B, chloroplastic, found in Arabidopsis thaliana (Mouse-ear cress).